The sequence spans 344 residues: NADH-ubiquinone oxidoreductase chain 1 (344 aa).

10 helical membrane-spanning segments follow: residues 18-38 (FIII…IIAI), 58-78 (PNIV…KLLL), 89-109 (IFIF…AWAI), 123-143 (IGIL…IISG), 159-179 (AAQI…VLLC), 195-215 (IWYI…SLAE), 228-248 (AELV…LFFL), 253-273 (NIIL…LPPF), 281-301 (IPNS…FIWV), and 316-336 (LGWK…SGIL).

This sequence belongs to the complex I subunit 1 family.

It is found in the mitochondrion inner membrane. It catalyses the reaction a ubiquinone + NADH + 5 H(+)(in) = a ubiquinol + NAD(+) + 4 H(+)(out). Functionally, core subunit of the mitochondrial membrane respiratory chain NADH dehydrogenase (Complex I) that is believed to belong to the minimal assembly required for catalysis. Complex I functions in the transfer of electrons from NADH to the respiratory chain. The immediate electron acceptor for the enzyme is believed to be ubiquinone. This is NADH-ubiquinone oxidoreductase chain 1 (ND1) from Cyanidium caldarium (Red alga).